Reading from the N-terminus, the 143-residue chain is FIS1-related protein fis-1 (143 aa).

Residues 121 to 141 form a helical membrane-spanning segment; sequence LGLLGGAVAVVGGLVIAGLAF.

Belongs to the FIS1 family.

The protein resides in the mitochondrion outer membrane. Its subcellular location is the peroxisome membrane. Involved in the fragmentation of the mitochondrial network. Involved in perinuclear clustering of the mitochondrial network. Plays a role in removal of ultraviolet C radiation-induced mitochondrial DNA damage. May act, redundantly with fis-2, downstream of mitochondrial fission, before the fission products participate in either mitochondrial homeostasis, mitophagy, or apoptosis. This is FIS1-related protein fis-1 from Caenorhabditis elegans.